The sequence spans 132 residues: Large ribosomal subunit protein uL14 (132 aa).

The protein belongs to the universal ribosomal protein uL14 family. In terms of assembly, part of the 50S ribosomal subunit. Forms a cluster with proteins L3 and L24e, part of which may contact the 16S rRNA in 2 intersubunit bridges.

Binds to 23S rRNA. Forms part of two intersubunit bridges in the 70S ribosome. The chain is Large ribosomal subunit protein uL14 from Methanococcus maripaludis (strain C7 / ATCC BAA-1331).